Here is a 306-residue protein sequence, read N- to C-terminus: Large ribosomal subunit protein uL2m (306 aa).

The transit peptide at 1-60 directs the protein to the mitochondrion; it reads MALRVVTRALGSLSLTPRIAAVPGPSLLPAAQVTNNVLLQLPSASMLLPSRPLLTSVALS.

This sequence belongs to the universal ribosomal protein uL2 family. In terms of assembly, component of the mitochondrial ribosome large subunit (39S) which comprises a 16S rRNA and about 50 distinct proteins.

The protein resides in the mitochondrion. The protein is Large ribosomal subunit protein uL2m (MRPL2) of Bos taurus (Bovine).